Consider the following 689-residue polypeptide: Transcription termination factor Rho (689 aa).

The segment covering 1–20 (MPRTPKNQNLEQNTQTQSLT) has biased composition (polar residues). 2 disordered regions span residues 1-90 (MPRT…KQPV) and 151-213 (AQAQ…NRNN). Over residues 52–65 (PKRRGRKPNPKTKA) the composition is skewed to basic residues. Composition is skewed to low complexity over residues 170–183 (NAQQ…QNGE) and 191–213 (NNQN…NRNN). The region spanning 287 to 362 (IIYTEGVLEV…RRIDRVNFEE (76 aa)) is the Rho RNA-BD domain. Residues 405-410 (GKGQRS), 417-422 (RTGKTV), and Arg-448 contribute to the ATP site.

It belongs to the Rho family. Homohexamer. The homohexamer assembles into an open ring structure.

Functionally, facilitates transcription termination by a mechanism that involves Rho binding to the nascent RNA, activation of Rho's RNA-dependent ATPase activity, and release of the mRNA from the DNA template. This chain is Transcription termination factor Rho, found in Fibrobacter succinogenes (strain ATCC 19169 / S85).